A 338-amino-acid chain; its full sequence is Holliday junction branch migration complex subunit RuvB (338 aa).

The interval 1-182 (MDDRMVDQSQ…FGVHLRLEYY (182 aa)) is large ATPase domain (RuvB-L). ATP contacts are provided by residues Leu21, Arg22, Gly63, Lys66, Thr67, Thr68, 129–131 (EDF), Arg172, Tyr182, and Arg219. Mg(2+) is bound at residue Thr67. Residues 183–253 (KESELKDIII…TTKRALQLLQ (71 aa)) are small ATPAse domain (RuvB-S). Residues 256–338 (DYGLDYIDHK…KNGKRDNFEY (83 aa)) are head domain (RuvB-H). Arg292, Arg311, and Arg316 together coordinate DNA.

The protein belongs to the RuvB family. Homohexamer. Forms an RuvA(8)-RuvB(12)-Holliday junction (HJ) complex. HJ DNA is sandwiched between 2 RuvA tetramers; dsDNA enters through RuvA and exits via RuvB. An RuvB hexamer assembles on each DNA strand where it exits the tetramer. Each RuvB hexamer is contacted by two RuvA subunits (via domain III) on 2 adjacent RuvB subunits; this complex drives branch migration. In the full resolvosome a probable DNA-RuvA(4)-RuvB(12)-RuvC(2) complex forms which resolves the HJ.

The protein localises to the cytoplasm. It catalyses the reaction ATP + H2O = ADP + phosphate + H(+). Functionally, the RuvA-RuvB-RuvC complex processes Holliday junction (HJ) DNA during genetic recombination and DNA repair, while the RuvA-RuvB complex plays an important role in the rescue of blocked DNA replication forks via replication fork reversal (RFR). RuvA specifically binds to HJ cruciform DNA, conferring on it an open structure. The RuvB hexamer acts as an ATP-dependent pump, pulling dsDNA into and through the RuvAB complex. RuvB forms 2 homohexamers on either side of HJ DNA bound by 1 or 2 RuvA tetramers; 4 subunits per hexamer contact DNA at a time. Coordinated motions by a converter formed by DNA-disengaged RuvB subunits stimulates ATP hydrolysis and nucleotide exchange. Immobilization of the converter enables RuvB to convert the ATP-contained energy into a lever motion, pulling 2 nucleotides of DNA out of the RuvA tetramer per ATP hydrolyzed, thus driving DNA branch migration. The RuvB motors rotate together with the DNA substrate, which together with the progressing nucleotide cycle form the mechanistic basis for DNA recombination by continuous HJ branch migration. Branch migration allows RuvC to scan DNA until it finds its consensus sequence, where it cleaves and resolves cruciform DNA. This is Holliday junction branch migration complex subunit RuvB from Staphylococcus carnosus (strain TM300).